Consider the following 226-residue polypeptide: Glutathione S-transferase kappa 1 (226 aa).

Residues 15-17 (SPY), Asn-53, and 199-200 (SD) contribute to the glutathione site.

The protein belongs to the GST superfamily. Kappa family.

The catalysed reaction is RX + glutathione = an S-substituted glutathione + a halide anion + H(+). This chain is Glutathione S-transferase kappa 1 (gstk-1), found in Caenorhabditis elegans.